An 87-amino-acid chain; its full sequence is Small ribosomal subunit protein uS15c (87 aa).

This sequence belongs to the universal ribosomal protein uS15 family. In terms of assembly, part of the 30S ribosomal subunit.

It is found in the plastid. The protein resides in the chloroplast. The polypeptide is Small ribosomal subunit protein uS15c (rps15) (Oenothera argillicola (Appalachian evening primrose)).